The sequence spans 561 residues: Acylcarnitine hydrolase (561 aa).

The signal sequence occupies residues 1–26 (MTRNQLHNWLNAGFFGLLLLLIHVQG). Cysteine 97 and cysteine 125 are joined by a disulfide. Catalysis depends on serine 230, which acts as the Acyl-ester intermediate. A disulfide bridge links cysteine 282 with cysteine 293. Catalysis depends on charge relay system residues glutamate 347 and histidine 459. The short motif at 558–561 (HREL) is the Prevents secretion from ER element.

The protein belongs to the type-B carboxylesterase/lipase family. Detected in liver (at protein level).

It localises to the microsome. Its subcellular location is the endoplasmic reticulum. It carries out the reaction an O-acyl-(R)-carnitine + H2O = (R)-carnitine + a fatty acid + H(+). It catalyses the reaction all-trans-retinyl hexadecanoate + H2O = all-trans-retinol + hexadecanoate + H(+). In terms of biological role, hydrolase with high activity towards palmitoylcarnitine. Is also active with p-nitrophenylacetate and alpha-naphthylacetate. May also hydrolyze retinyl esters. The sequence is that of Acylcarnitine hydrolase from Mus musculus (Mouse).